We begin with the raw amino-acid sequence, 798 residues long: Integrin beta-5 (798 aa).

The first 23 residues, 1–23 (MPRVPATLYACLLGLCALVPRLA), serve as a signal peptide directing secretion. At 24 to 719 (GLNICTSGSA…REPECGSAPN (696 aa)) the chain is on the extracellular side. The PSI domain occupies 27 to 76 (ICTSGSATSCEECLLIHPKCAWCSKEYFGNPRSITSRCDLKANLIRNGCE). 19 disulfides stabilise this stretch: cysteine 28/cysteine 46, cysteine 36/cysteine 463, cysteine 39/cysteine 64, cysteine 49/cysteine 75, cysteine 202/cysteine 211, cysteine 259/cysteine 300, cysteine 401/cysteine 413, cysteine 433/cysteine 461, cysteine 465/cysteine 484, cysteine 476/cysteine 487, cysteine 489/cysteine 498, cysteine 500/cysteine 530, cysteine 513/cysteine 528, cysteine 522/cysteine 533, cysteine 535/cysteine 548, cysteine 550/cysteine 571, cysteine 555/cysteine 569, cysteine 563/cysteine 574, and cysteine 576/cysteine 585. Positions 136 to 378 (YPVDLYYLMD…QLIINAYSSI (243 aa)) constitute a VWFA domain. Mg(2+) contacts are provided by serine 147 and serine 149. Positions 149, 152, 153, and 184 each coordinate Ca(2+). Ca(2+)-binding residues include asparagine 242, aspartate 244, proline 246, and glutamate 247. Glutamate 247 provides a ligand contact to Mg(2+). N-linked (GlcNAc...) asparagine glycosylation is present at asparagine 347. Glycine 362 contacts Ca(2+). N-linked (GlcNAc...) asparagine glycans are attached at residues asparagine 460 and asparagine 479. I-EGF domains follow at residues 465–499 (CSTG…TRCE), 500–549 (CQEG…PFCE), 550–586 (CDSF…DNCN), and 587–626 (CSTD…ETCE). Asparagine 505 carries an N-linked (GlcNAc...) asparagine glycan. N-linked (GlcNAc...) asparagine glycosylation occurs at asparagine 586. Intrachain disulfides connect cysteine 587-cysteine 610, cysteine 594-cysteine 608, cysteine 602-cysteine 613, cysteine 615-cysteine 625, cysteine 628-cysteine 631, cysteine 635-cysteine 682, cysteine 641-cysteine 661, cysteine 644-cysteine 657, and cysteine 690-cysteine 714. N-linked (GlcNAc...) asparagine glycosylation is found at asparagine 654 and asparagine 705. Residues 720-742 (AMTILLAVVGSILLIGMALLAIW) form a helical membrane-spanning segment. Over 743 to 798 (KLLVTIHDRREFAKFQSERSRARYEMASNPLYRKPISTHTVDFAFNKFNKSYNGSV) the chain is Cytoplasmic. Serine 770 is modified (phosphoserine).

Belongs to the integrin beta chain family. In terms of assembly, heterodimer of an alpha and a beta subunit. Beta-5 (ITGB5) associates with alpha-V (ITGAV). Interacts with MYO10. Interacts with DAB2. Integrin ITGAV:ITGB5 interacts with FBLN5 (via N-terminus). ITGAV:ITGB5 interacts with CCN3. Interacts with tensin TNS3; TNS3 also interacts with PEAK1, thus acting as an adapter molecule to bridge the association of PEAK1 with ITGB5.

The protein localises to the cell membrane. Its function is as follows. Integrin alpha-V/beta-5 (ITGAV:ITGB5) is a receptor for fibronectin. It recognizes the sequence R-G-D in its ligand. The chain is Integrin beta-5 (Itgb5) from Mus musculus (Mouse).